We begin with the raw amino-acid sequence, 628 residues long: FAD-linked oxidoreductase easE (628 aa).

Positions M1–S20 are cleaved as a signal peptide. The FAD-binding PCMH-type domain maps to H144–N328. Residue H182 is modified to Pros-8alpha-FAD histidine. Residues N343, N382, and N487 are each glycosylated (N-linked (GlcNAc...) asparagine).

It belongs to the oxygen-dependent FAD-linked oxidoreductase family. FAD serves as cofactor.

The protein operates within alkaloid biosynthesis; ergot alkaloid biosynthesis. Its function is as follows. FAD binding oxidoreductase; part of the gene cluster that mediates the biosynthesis of fumiclavanine C, a fungal ergot alkaloid. DmaW catalyzes the first step of ergot alkaloid biosynthesis by condensing dimethylallyl diphosphate (DMAP) and tryptophan to form 4-dimethylallyl-L-tryptophan. The second step is catalyzed by the methyltransferase easF that methylates 4-dimethylallyl-L-tryptophan in the presence of S-adenosyl-L-methionine, resulting in the formation of 4-dimethylallyl-L-abrine. The catalase easC and the FAD-dependent oxidoreductase easE then transform 4-dimethylallyl-L-abrine to chanoclavine-I which is further oxidized by EasD in the presence of NAD(+), resulting in the formation of chanoclavine-I aldehyde. EasA reduces chanoclavine-I aldehyde to dihydrochanoclavine-I aldehyde that spontaneously dehydrates to form 6,8-dimethyl-6,7-didehydroergoline. EasG then catalyzes the reduction of 6,8-dimethyl-6,7-didehydroergoline to form festuclavine. Hydrolysis of festuclavine by easM then leads to the formation of fumigaclavine B which is in turn acetylated by easN to fumigaclavine A. Finally, easL catalyzes the conversion of fumigaclavine A into fumigaclavine C by attaching a dimethylallyl moiety to C-2 of the indole nucleus. In Aspergillus fumigatus (strain ATCC MYA-4609 / CBS 101355 / FGSC A1100 / Af293) (Neosartorya fumigata), this protein is FAD-linked oxidoreductase easE.